Reading from the N-terminus, the 159-residue chain is Ribosomal RNA large subunit methyltransferase H (159 aa).

Residues Leu76, Gly108, and 127–132 contribute to the S-adenosyl-L-methionine site; that span reads FSHMTF.

It belongs to the RNA methyltransferase RlmH family. As to quaternary structure, homodimer.

The protein resides in the cytoplasm. It catalyses the reaction pseudouridine(1915) in 23S rRNA + S-adenosyl-L-methionine = N(3)-methylpseudouridine(1915) in 23S rRNA + S-adenosyl-L-homocysteine + H(+). Functionally, specifically methylates the pseudouridine at position 1915 (m3Psi1915) in 23S rRNA. The protein is Ribosomal RNA large subunit methyltransferase H of Halothermothrix orenii (strain H 168 / OCM 544 / DSM 9562).